Reading from the N-terminus, the 83-residue chain is Small ribosomal subunit protein bS20 (83 aa).

Belongs to the bacterial ribosomal protein bS20 family.

Functionally, binds directly to 16S ribosomal RNA. The polypeptide is Small ribosomal subunit protein bS20 (Amoebophilus asiaticus (strain 5a2)).